A 481-amino-acid chain; its full sequence is Docking protein 1 (481 aa).

M1 carries the N-acetylmethionine modification. In terms of domain architecture, PH spans 4 to 119 (AVMEGPLFLQ…WVQTLCRNAF (116 aa)). A Phosphoserine modification is found at S48. One can recognise an IRS-type PTB domain in the interval 151 to 259 (EGSQFWVTVQ…HRQKAQGKAG (109 aa)). A phosphoserine mark is found at S269 and S291. Residues 270 to 293 (HEGEVAEGKLPSPPGPQELLDSPP) are disordered. At Y296 the chain carries Phosphotyrosine. Positions 307-329 (PCPSQDSLYSDPLDSTSAQAGEG) are disordered. Over residues 310–325 (SQDSLYSDPLDSTSAQ) the composition is skewed to polar residues. A phosphotyrosine mark is found at Y337 and Y341. Y362 carries the phosphotyrosine; by INSR modification. Phosphotyrosine is present on Y377. A Phosphotyrosine; by INSR modification is found at Y398. The tract at residues 404–481 (PATDDYAVPP…KTGVKSEGST (78 aa)) is disordered. Residue Y409 is modified to Phosphotyrosine. S416 carries the phosphoserine modification. A compositionally biased stretch (polar residues) spans 436–458 (ATGSGIKSHNSALYSQVQKSGAS). Y449 carries the phosphotyrosine modification. Phosphoserine is present on S460.

The protein belongs to the DOK family. Type A subfamily. In terms of assembly, interacts with ABL1. Interacts with RasGAP and INPP5D/SHIP1. Interacts directly with phosphorylated ITGB3. Interacts with SRMS (via the SH2 and SH3 domains). Post-translationally, constitutively tyrosine-phosphorylated. Phosphorylated by TEC. Phosphorylated by LYN. Phosphorylated on tyrosine residues by the insulin receptor kinase. Results in the negative regulation of the insulin signaling pathway. Phosphorylated on tyrosine residues by SRMS. As to expression, expressed in pancreas, heart, leukocyte and spleen. Expressed in both resting and activated peripheral blood T-cells. Expressed in breast cancer.

The protein resides in the cytoplasm. Its subcellular location is the nucleus. It is found in the perinuclear region. Functionally, DOK proteins are enzymatically inert adaptor or scaffolding proteins. They provide a docking platform for the assembly of multimolecular signaling complexes. DOK1 appears to be a negative regulator of the insulin signaling pathway. Modulates integrin activation by competing with talin for the same binding site on ITGB3. This is Docking protein 1 (DOK1) from Homo sapiens (Human).